The sequence spans 164 residues: MYRIRVFGDPVLRKRAKPVTKFDDNLEKTIERMIETMYHYDGVGLAAPQVGISQRFFVMDVGNGPVAVINPEILEIDPETEVAEEGCLSFPEIFVEIERSKRIKVRYQNTKGEYVEEVLEGYAARVFQHEFDHLNGVLIIDRISPAKRLLLRKKLMDIARTVKR.

Fe cation contacts are provided by Cys-87 and His-129. Glu-130 is an active-site residue. His-133 serves as a coordination point for Fe cation.

The protein belongs to the polypeptide deformylase family. The cofactor is Fe(2+).

It catalyses the reaction N-terminal N-formyl-L-methionyl-[peptide] + H2O = N-terminal L-methionyl-[peptide] + formate. Removes the formyl group from the N-terminal Met of newly synthesized proteins. Requires at least a dipeptide for an efficient rate of reaction. N-terminal L-methionine is a prerequisite for activity but the enzyme has broad specificity at other positions. The protein is Peptide deformylase of Thermotoga petrophila (strain ATCC BAA-488 / DSM 13995 / JCM 10881 / RKU-1).